The chain runs to 141 residues: Nucleoside triphosphatase NudI (141 aa).

Residues Met1–Leu141 enclose the Nudix hydrolase domain. The short motif at Gly38 to Gly59 is the Nudix box element.

The protein belongs to the Nudix hydrolase family. NudI subfamily. In terms of assembly, monomer. Mg(2+) serves as cofactor.

The catalysed reaction is a ribonucleoside 5'-triphosphate + H2O = a ribonucleoside 5'-phosphate + diphosphate + H(+). It catalyses the reaction a 2'-deoxyribonucleoside 5'-triphosphate + H2O = a 2'-deoxyribonucleoside 5'-phosphate + diphosphate + H(+). The enzyme catalyses dUTP + H2O = dUMP + diphosphate + H(+). It carries out the reaction dTTP + H2O = dTMP + diphosphate + H(+). The catalysed reaction is dCTP + H2O = dCMP + diphosphate + H(+). In terms of biological role, catalyzes the hydrolysis of nucleoside triphosphates, with a preference for pyrimidine deoxynucleoside triphosphates (dUTP, dTTP and dCTP). The protein is Nucleoside triphosphatase NudI of Salmonella heidelberg (strain SL476).